The primary structure comprises 1265 residues: DNA-directed RNA polymerase subunit beta'' (1265 aa).

4 residues coordinate Zn(2+): Cys223, Cys297, Cys304, and Cys307.

Belongs to the RNA polymerase beta' chain family. RpoC2 subfamily. In plastids the minimal PEP RNA polymerase catalytic core is composed of four subunits: alpha, beta, beta', and beta''. When a (nuclear-encoded) sigma factor is associated with the core the holoenzyme is formed, which can initiate transcription. Requires Zn(2+) as cofactor.

Its subcellular location is the plastid. The protein localises to the cyanelle. The enzyme catalyses RNA(n) + a ribonucleoside 5'-triphosphate = RNA(n+1) + diphosphate. Its function is as follows. DNA-dependent RNA polymerase catalyzes the transcription of DNA into RNA using the four ribonucleoside triphosphates as substrates. The sequence is that of DNA-directed RNA polymerase subunit beta'' from Cyanophora paradoxa.